A 1574-amino-acid chain; its full sequence is MAFSKGFRIYHKLDPPPFSLIVETRHKEECLMFESGAVAVLSSAEKEAIKGTYAKVLDAYGLLGVLRLNLGDTMLHYLVLVTGCMSVGKIQESEVFRVTSTEFISLRVDASDEDRISEVRKVLNSGNFYFAWSASGVSLDLSLNAHRSMQEHTTDNRFFWNQSLHLHLKHYGVNCDDWLLRLMCGGVEIRTIYAAHKQAKACLISRLSCERAGTRFNVRGTNDDGHVANFVETEQVIYLDDCVSSFIQIRGSVPLFWEQPGLQVGSHRVRMSRGFEANAPAFDRHFRTLKDLYGKQIVVNLLGSKEGEHMLSKAFQSHLKASEHASDIHMVSFDYHQMVKGGKAEKLHSVLKPQVQKFLDYGFFYFDGSAVQRCQSGTVRTNCLDCLDRTNSVQAFLGLEMLAKQLEALGLAEKPQLVTRFQEVFRSMWSVNGDSISKIYAGTGALEGKAKLKDGARSVTRTIQNNFFDSSKQEAIDVLLLGNTLNSDLADKARALLTTGSLRVSEQTLQSASSKVLKNMCENFYKYSKPKKIRVCVGTWNVNGGKQFRSIAFKNQTLTDWLLDAPKLAGIQEFQDKRSKPTDIFAIGFEEMVELNAGNIVNASTTNQKLWAVELQKTISRDNKYVLLASEQLVGVCLFVFIRPQHAPFIRDVAVDTVKTGMGGATGNKGAVAIRMLFHTTSLCFVCSHFAAGQSQVKERNEDFVEIARKLSFPMGRMLFSHDYVFWCGDFNYRIDLPNEEVKELIRQQNWDSLIAGDQLINQKNAGQIFRGFLEGKVTFAPTYKYDLFSEDYDTSEKCRTPAWTDRVLWRRRKWPFDRSAEDLDLLNASFQDESKILYTWTPGTLLHYGRAELKTSDHRPVVALIDIDIFEVEAEERQKIYKEVIAVQGPPDGTVLVSIKSSAQENTFFDDALIDELLQQFAHFGEVILIRFVEDKMWVTFLEGSSALNVLSLNGKELLNRTITITLKSPDWIKTLEEEMSLEKISVTLPSSTSSTLLGEDAEVSADFDMEGDVDDYSAEVEELLPQHLQPSSSSGLGTSPSSSPRTSPCQSPTAPEYSAPSLPIRPSRAPSRTPGPLSSQGAPVDTQPAAQKESSQTIEPKRPPPPRPVAPPARPAPPQRPPPPSGARSPAPARKEFGGVGAPPSPGVTRREMEAPKSPGTARKDNIGRNQPSPQAGLAGPGPSGYGAARPTIPARAGVISAPQSQARVSAGRLTPESQSKPLETSKGPAVLPEPLKPQAAFPPQPSLPTPAQKLQDPLVPIAAPMPPSIPQSNLETPPLPPPRSRSSQSLPSDSSPQLQQEQPTGQQVKINGACGVKQEPTLKSDPFEDLSLSVLAVSKAQPSAQISPVLTPDPKMLIQLPSASQSKVNSLSSVSCMLTMPPVPEQSKSQESVGSSANPFPSLPTRNPFTDRTAAPGNPFRVQSQESEATSWLSKEEPVSNSPFPPLMPLSHDMSKPSSSLDGFEDNFDLQSQSTVKTSNPKGWVTFDEDEDFPTKGKSRSVYPDSLGNTAASFDDDWSKGTNVSFCVLPARRPPPPPPPVPLLPPGTTSSAGPSTTLSSKASPTLDFTER.

Residues 119–442 enclose the SAC domain; the sequence is VRKVLNSGNF…GDSISKIYAG (324 aa). A catalytic region spans residues 500 to 899; it reads GSLRVSEQTL…GPPDGTVLVS (400 aa). Residues serine 820 and serine 830 each carry the phosphoserine modification. In terms of domain architecture, RRM spans 894–971; that stretch reads GTVLVSIKSS…RTITITLKSP (78 aa). Positions 1029 to 1054 are enriched in low complexity; it reads HLQPSSSSGLGTSPSSSPRTSPCQSP. Residues 1029 to 1327 are disordered; it reads HLQPSSSSGL…GVKQEPTLKS (299 aa). At serine 1053 the chain carries Phosphoserine. Positions 1090–1100 are enriched in polar residues; sequence PAAQKESSQTI. Residues 1105-1127 are compositionally biased toward pro residues; the sequence is PPPPRPVAPPARPAPPQRPPPPS. Serine 1147 and serine 1175 each carry phosphoserine. The residue at position 1198 (arginine 1198) is an Omega-N-methylarginine. Threonine 1217 is subject to Phosphothreonine. Low complexity predominate over residues 1287-1310; sequence SRSSQSLPSDSSPQLQQEQPTGQQ. Phosphoserine occurs at positions 1289 and 1350. Position 1354 is a phosphothreonine (threonine 1354). Disordered stretches follow at residues 1382–1519 and 1532–1574; these read TMPP…SFDD and LPAR…FTER. Residues 1389–1413 are compositionally biased toward polar residues; sequence QSKSQESVGSSANPFPSLPTRNPFT. 3 repeat units span residues 1401–1403, 1410–1412, and 1421–1423. The tract at residues 1401–1423 is 3 X 3 AA repeats of N-P-F; it reads NPFPSLPTRNPFTDRTAAPGNPF. Composition is skewed to polar residues over residues 1424–1436 and 1472–1484; these read RVQS…TSWL and DLQS…TSNP. Residues 1535 to 1548 show a composition bias toward pro residues; the sequence is RRPPPPPPPVPLLP. The span at 1549-1563 shows a compositional bias: low complexity; sequence PGTTSSAGPSTTLSS. Phosphoserine is present on serine 1566.

It belongs to the synaptojanin family. The protein in the central section; belongs to the inositol 1,4,5-trisphosphate 5-phosphatase family. As to quaternary structure, interacts with ASH/GRB2. Interacts with PACSIN1, PACSIN2 and PACSIN3. Interacts with AMPH, SH3GL1, SH3GL2 and SH3GL3. Interacts with MYO1E (via SH3 domain). Interacts with BIN1 and DNM1. Interacts with EPS15. Found in neonatal brain, and in a wide variety of adult non-neuronal tissues. Concentrated at clathrin-coated endocytic intermediates in nerve terminals. Also detected in the lung and heart. Expressed at higher levels than isoform 2 in the testis and liver and is not detected in the skeletal muscle. As to expression, expressed predominantly in the neurons, but is also found in all other tissues at much lower levels. Also detected in the lung and heart. Epressed at lower levels than isoform 1 in the testis and liver and is not detected in the skeletal muscle. In terms of tissue distribution, expressed in the brain.

It localises to the membrane. It is found in the cytoplasm. The protein localises to the perinuclear region. The catalysed reaction is a 1,2-diacyl-sn-glycero-3-phospho-(1D-myo-inositol-4,5-bisphosphate) + H2O = a 1,2-diacyl-sn-glycero-3-phospho-(1D-myo-inositol 4-phosphate) + phosphate. Phosphatase that acts on various phosphoinositides, including phosphatidylinositol 4-phosphate, phosphatidylinositol (4,5)-bisphosphate and phosphatidylinositol (3,4,5)-trisphosphate. Has a role in clathrin-mediated endocytosis. Hydrolyzes PIP2 bound to actin regulatory proteins resulting in the rearrangement of actin filaments downstream of tyrosine kinase and ASH/GRB2. This Rattus norvegicus (Rat) protein is Synaptojanin-1 (Synj1).